The primary structure comprises 230 residues: LexA repressor (230 aa).

A DNA-binding region (H-T-H motif) is located at residues 28 to 48; that stretch reads IREIGEALDIRSTNGVNDHLK. Catalysis depends on for autocatalytic cleavage activity residues Ser148 and Lys185.

It belongs to the peptidase S24 family. Homodimer.

It catalyses the reaction Hydrolysis of Ala-|-Gly bond in repressor LexA.. Its function is as follows. Represses a number of genes involved in the response to DNA damage (SOS response), including recA and lexA. In the presence of single-stranded DNA, RecA interacts with LexA causing an autocatalytic cleavage which disrupts the DNA-binding part of LexA, leading to derepression of the SOS regulon and eventually DNA repair. The sequence is that of LexA repressor from Anaeromyxobacter sp. (strain K).